The sequence spans 317 residues: Transaldolase (317 aa).

Catalysis depends on Lys132, which acts as the Schiff-base intermediate with substrate.

The protein belongs to the transaldolase family. Type 1 subfamily. In terms of assembly, homodimer.

It localises to the cytoplasm. It carries out the reaction D-sedoheptulose 7-phosphate + D-glyceraldehyde 3-phosphate = D-erythrose 4-phosphate + beta-D-fructose 6-phosphate. It participates in carbohydrate degradation; pentose phosphate pathway; D-glyceraldehyde 3-phosphate and beta-D-fructose 6-phosphate from D-ribose 5-phosphate and D-xylulose 5-phosphate (non-oxidative stage): step 2/3. Transaldolase is important for the balance of metabolites in the pentose-phosphate pathway. This chain is Transaldolase, found in Mannheimia succiniciproducens (strain KCTC 0769BP / MBEL55E).